A 306-amino-acid polypeptide reads, in one-letter code: UDP-3-O-acyl-N-acetylglucosamine deacetylase (306 aa).

The Zn(2+) site is built by His-79, His-238, and Asp-242. His-265 (proton donor) is an active-site residue.

This sequence belongs to the LpxC family. Requires Zn(2+) as cofactor.

It catalyses the reaction a UDP-3-O-[(3R)-3-hydroxyacyl]-N-acetyl-alpha-D-glucosamine + H2O = a UDP-3-O-[(3R)-3-hydroxyacyl]-alpha-D-glucosamine + acetate. Its pathway is glycolipid biosynthesis; lipid IV(A) biosynthesis; lipid IV(A) from (3R)-3-hydroxytetradecanoyl-[acyl-carrier-protein] and UDP-N-acetyl-alpha-D-glucosamine: step 2/6. Its function is as follows. Catalyzes the hydrolysis of UDP-3-O-myristoyl-N-acetylglucosamine to form UDP-3-O-myristoylglucosamine and acetate, the committed step in lipid A biosynthesis. The polypeptide is UDP-3-O-acyl-N-acetylglucosamine deacetylase (Shewanella oneidensis (strain ATCC 700550 / JCM 31522 / CIP 106686 / LMG 19005 / NCIMB 14063 / MR-1)).